Consider the following 255-residue polypeptide: Octanoyltransferase (255 aa).

Residues 1-27 (MPPASDAHAAPDAAASTSASPQSCAAP) form a disordered region. Residues 59 to 240 (PDTGDEIWVV…RLIANLDGAT (182 aa)) enclose the BPL/LPL catalytic domain. Substrate contacts are provided by residues 99 to 106 (RGGQITYH), 171 to 173 (ALG), and 184 to 186 (GLS). C202 functions as the Acyl-thioester intermediate in the catalytic mechanism.

Belongs to the LipB family.

It is found in the cytoplasm. The enzyme catalyses octanoyl-[ACP] + L-lysyl-[protein] = N(6)-octanoyl-L-lysyl-[protein] + holo-[ACP] + H(+). The protein operates within protein modification; protein lipoylation via endogenous pathway; protein N(6)-(lipoyl)lysine from octanoyl-[acyl-carrier-protein]: step 1/2. Catalyzes the transfer of endogenously produced octanoic acid from octanoyl-acyl-carrier-protein onto the lipoyl domains of lipoate-dependent enzymes. Lipoyl-ACP can also act as a substrate although octanoyl-ACP is likely to be the physiological substrate. The polypeptide is Octanoyltransferase (Burkholderia thailandensis (strain ATCC 700388 / DSM 13276 / CCUG 48851 / CIP 106301 / E264)).